The sequence spans 89 residues: Small ribosomal subunit protein uS14 (89 aa).

Belongs to the universal ribosomal protein uS14 family. As to quaternary structure, part of the 30S ribosomal subunit. Contacts proteins S3 and S10.

Its function is as follows. Binds 16S rRNA, required for the assembly of 30S particles and may also be responsible for determining the conformation of the 16S rRNA at the A site. This is Small ribosomal subunit protein uS14 from Chlorobium phaeobacteroides (strain BS1).